The primary structure comprises 478 residues: JmjC domain-containing histone demethylation protein 1 (478 aa).

The segment at S5–K68 adopts a PHD-type zinc-finger fold. Residues S217–R383 form the JmjC domain. T266 provides a ligand contact to substrate. 2 residues coordinate Fe cation: H269 and D271. Residue K286 participates in substrate binding. Fe cation is bound at residue H351.

Belongs to the JHDM1 histone demethylase family. Requires Fe(2+) as cofactor.

It is found in the nucleus. The catalysed reaction is N(6),N(6)-dimethyl-L-lysyl(36)-[histone H3] + 2 2-oxoglutarate + 2 O2 = L-lysyl(36)-[histone H3] + 2 formaldehyde + 2 succinate + 2 CO2. In terms of biological role, histone demethylase that specifically demethylates 'Lys-36' of histone H3, thereby playing a central role in histone code. This Candida albicans (strain SC5314 / ATCC MYA-2876) (Yeast) protein is JmjC domain-containing histone demethylation protein 1 (JHD1).